The sequence spans 303 residues: Ornithine carbamoyltransferase (303 aa).

Residues 52–55, Gln79, Arg103, and 130–133 contribute to the carbamoyl phosphate site; these read STRT and HPCQ. Residues Asn161, Asp222, and 226–227 contribute to the L-ornithine site; that span reads SM. Carbamoyl phosphate contacts are provided by residues 262–263 and Arg290; that span reads CL.

It belongs to the aspartate/ornithine carbamoyltransferase superfamily. OTCase family.

The protein localises to the cytoplasm. The enzyme catalyses carbamoyl phosphate + L-ornithine = L-citrulline + phosphate + H(+). It functions in the pathway amino-acid biosynthesis; L-arginine biosynthesis; L-arginine from L-ornithine and carbamoyl phosphate: step 1/3. Its function is as follows. Reversibly catalyzes the transfer of the carbamoyl group from carbamoyl phosphate (CP) to the N(epsilon) atom of ornithine (ORN) to produce L-citrulline. The protein is Ornithine carbamoyltransferase of Geobacter metallireducens (strain ATCC 53774 / DSM 7210 / GS-15).